The following is a 313-amino-acid chain: tRNA dimethylallyltransferase (313 aa).

An ATP-binding site is contributed by 11–18; sequence GPTAAGKS. Residue 13-18 participates in substrate binding; the sequence is TAAGKS. Interaction with substrate tRNA regions lie at residues 36 to 39, 160 to 164, and 244 to 249; these read DSAT, QRIQR, and RCVGYR.

Belongs to the IPP transferase family. As to quaternary structure, monomer. The cofactor is Mg(2+).

It carries out the reaction adenosine(37) in tRNA + dimethylallyl diphosphate = N(6)-dimethylallyladenosine(37) in tRNA + diphosphate. Catalyzes the transfer of a dimethylallyl group onto the adenine at position 37 in tRNAs that read codons beginning with uridine, leading to the formation of N6-(dimethylallyl)adenosine (i(6)A). This is tRNA dimethylallyltransferase from Bordetella parapertussis (strain 12822 / ATCC BAA-587 / NCTC 13253).